A 124-amino-acid polypeptide reads, in one-letter code: Photoactive yellow protein (124 aa).

The region spanning 22-85 (AESLPFGAVL…GEFLKFNRTG (64 aa)) is the PAS domain. The residue at position 68 (Cys68) is an S-(4-hydroxycinnamyl)cysteine.

The protein belongs to the photoactive yellow protein family. The 4-hydroxycinnamic acid (p-coumaric acid) chromophore is covalently bound via a thioester linkage.

This photoactive protein is a photoreceptor with kinetics similar to that of rhodopsin. The sequence is that of Photoactive yellow protein (pyp) from Rhodobacter capsulatus (strain ATCC BAA-309 / NBRC 16581 / SB1003).